An 894-amino-acid chain; its full sequence is Glutamate receptor 3 (894 aa).

The first 28 residues, 1–28, serve as a signal peptide directing secretion; that stretch reads MARQKKMGQNVLRAVFFLVLGLLGHSHG. Over 29-552 the chain is Extracellular; that stretch reads GFPNTISIGG…GVFSFLDPLA (524 aa). N-linked (GlcNAc...) asparagine glycosylation is found at Asn63, Asn266, Asn380, Asn415, and Asn422. Cysteines 91 and 340 form a disulfide. Residues Pro508, Thr510, and Arg515 each coordinate L-glutamate. A helical transmembrane segment spans residues 553–573; it reads YEIWMCIVFASIGVSVVLFLV. Over 574–602 the chain is Cytoplasmic; that stretch reads SRFSPYEWHLEDNNEEPRDPQSPPDPPNE. The helical; Pore-forming intramembrane region spans 603-618; that stretch reads FGIFNSLWFSLGAFMQ. An intramembrane segment occupies 619-621; that stretch reads QGC. The S-palmitoyl cysteine moiety is linked to residue Cys621. The Cytoplasmic segment spans residues 622-627; that stretch reads DISPRS. Residues 628–648 form a helical membrane-spanning segment; that stretch reads LSGRIVGGVWWFFTLIIISSY. At 649–823 the chain is on the extracellular side; sequence TANLAAFLTV…DKTSALSLSN (175 aa). Positions 686, 687, and 737 each coordinate L-glutamate. A disulfide bond links Cys750 and Cys805. The chain crosses the membrane as a helical span at residues 824–844; the sequence is VAGVFYILVGGLGLAMMVALI. Topologically, residues 845–894 are cytoplasmic; it reads EFCYKSRAESKRMKLTKNTQNFKPAPATNTQNYATYREGYNVYGTESVKI. Cys847 is lipidated: S-palmitoyl cysteine. Phosphotyrosine occurs at positions 877 and 887.

Belongs to the glutamate-gated ion channel (TC 1.A.10.1) family. GRIA3 subfamily. In terms of assembly, homotetramer or heterotetramer of pore-forming glutamate receptor subunits. Tetramers may be formed by the dimerization of dimers. Interacts with PICK1, GRIP1 and GRIP2. Found in a complex with GRIA1, GRIA2, GRIA4, CNIH2, CNIH3, CACNG2, CACNG3, CACNG4, CACNG5, CACNG7 and CACNG8. Interacts with CACNG5. Found in a complex with GRIA1, GRIA2, GRIA4, DLG4, CACNG8 and CNIH2.

The protein resides in the cell membrane. The protein localises to the postsynaptic cell membrane. It localises to the postsynaptic density membrane. The enzyme catalyses Ca(2+)(in) = Ca(2+)(out). Functionally, ionotropic glutamate receptor that functions as a ligand-gated cation channel, gated by L-glutamate and glutamatergic agonists such as alpha-amino-3-hydroxy-5-methyl-4-isoxazolepropionic acid (AMPA), quisqualic acid, and kainic acid. L-glutamate acts as an excitatory neurotransmitter at many synapses in the central nervous system and plays an important role in fast excitatory synaptic transmission by inducing long-term potentiation. Binding of the excitatory neurotransmitter L-glutamate induces a conformation change, leading to the opening of the cation channel, and thereby converts the chemical signal to an electrical impulse upon entry of calcium. The receptor then desensitizes rapidly and enters a transient inactive state, characterized by the presence of bound agonist. In the presence of CACNG8, shows resensitization which is characterized by a delayed accumulation of current flux upon continued application of glutamate. The polypeptide is Glutamate receptor 3 (Macaca fascicularis (Crab-eating macaque)).